The chain runs to 600 residues: Isocitrate dehydrogenase kinase/phosphatase (600 aa).

ATP is bound by residues 335-341 and K356; that span reads APGIRGM. Residue D390 is part of the active site.

Belongs to the AceK family.

The protein resides in the cytoplasm. It catalyses the reaction L-seryl-[isocitrate dehydrogenase] + ATP = O-phospho-L-seryl-[isocitrate dehydrogenase] + ADP + H(+). Its function is as follows. Bifunctional enzyme which can phosphorylate or dephosphorylate isocitrate dehydrogenase (IDH) on a specific serine residue. This is a regulatory mechanism which enables bacteria to bypass the Krebs cycle via the glyoxylate shunt in response to the source of carbon. When bacteria are grown on glucose, IDH is fully active and unphosphorylated, but when grown on acetate or ethanol, the activity of IDH declines drastically concomitant with its phosphorylation. The protein is Isocitrate dehydrogenase kinase/phosphatase of Bordetella parapertussis (strain 12822 / ATCC BAA-587 / NCTC 13253).